The chain runs to 655 residues: DNA mismatch repair protein MutL (655 aa).

Disordered stretches follow at residues 357-416 (EKKQ…DDYT) and 439-460 (DFDS…SKDP). Residues 371–383 (SHEEDEKNDDKAY) are compositionally biased toward basic and acidic residues. Residues 402–416 (NTSVSTSPNSDDDYT) show a composition bias toward polar residues.

It belongs to the DNA mismatch repair MutL/HexB family.

Its function is as follows. This protein is involved in the repair of mismatches in DNA. It is required for dam-dependent methyl-directed DNA mismatch repair. May act as a 'molecular matchmaker', a protein that promotes the formation of a stable complex between two or more DNA-binding proteins in an ATP-dependent manner without itself being part of a final effector complex. This Staphylococcus saprophyticus subsp. saprophyticus (strain ATCC 15305 / DSM 20229 / NCIMB 8711 / NCTC 7292 / S-41) protein is DNA mismatch repair protein MutL.